The sequence spans 154 residues: MNFEGKLIGKDLKVAIVVSRFNDFITGRLLEGAKDTLIRHDVNEDNIDVAFVPGAFEIPLVAKKLASSGNYDAIITLGCVIRGATSHYDYVCNEVAKGVSKVNDQTNVPVIFGILTTESIEQAVERAGTKAGNKGAEAAVSAIEMANLLKSIKA.

5-amino-6-(D-ribitylamino)uracil-binding positions include Phe-21, 55–57 (AFE), and 79–81 (CVI). 84–85 (AT) lines the (2S)-2-hydroxy-3-oxobutyl phosphate pocket. His-87 functions as the Proton donor in the catalytic mechanism. Position 112 (Phe-112) interacts with 5-amino-6-(D-ribitylamino)uracil. Arg-126 lines the (2S)-2-hydroxy-3-oxobutyl phosphate pocket.

Belongs to the DMRL synthase family. Forms an icosahedral capsid composed of 60 subunits, arranged as a dodecamer of pentamers.

The enzyme catalyses (2S)-2-hydroxy-3-oxobutyl phosphate + 5-amino-6-(D-ribitylamino)uracil = 6,7-dimethyl-8-(1-D-ribityl)lumazine + phosphate + 2 H2O + H(+). The protein operates within cofactor biosynthesis; riboflavin biosynthesis; riboflavin from 2-hydroxy-3-oxobutyl phosphate and 5-amino-6-(D-ribitylamino)uracil: step 1/2. Functionally, catalyzes the formation of 6,7-dimethyl-8-ribityllumazine by condensation of 5-amino-6-(D-ribitylamino)uracil with 3,4-dihydroxy-2-butanone 4-phosphate. This is the penultimate step in the biosynthesis of riboflavin. The protein is 6,7-dimethyl-8-ribityllumazine synthase of Staphylococcus aureus (strain Mu50 / ATCC 700699).